Reading from the N-terminus, the 584-residue chain is Sodium/calcium exchanger NCL1 (584 aa).

5 helical membrane-spanning segments follow: residues phenylalanine 77 to leucine 97, leucine 120 to valine 140, valine 154 to glycine 174, alanine 215 to leucine 235, and valine 245 to phenylalanine 265. EF-hand domains lie at proline 305–glutamate 340 and aspartate 345–glutamate 380. Ca(2+) is bound by residues aspartate 318, aspartate 320, serine 322, threonine 324, glutamate 329, aspartate 358, serine 360, asparagine 362, and glutamate 369. Transmembrane regions (helical) follow at residues tryptophan 426–alanine 446, phenylalanine 466–isoleucine 486, tyrosine 504–isoleucine 524, phenylalanine 531–phenylalanine 551, and leucine 561–phenylalanine 581.

This sequence belongs to the Ca(2+):cation antiporter (CaCA) (TC 2.A.19) family.

The protein localises to the cell membrane. Its function is as follows. May function as a sodium/calcium exchanger (NCX) and participate in the maintenance of calcium homeostasis. May play a role abiotic stress responses. The protein is Sodium/calcium exchanger NCL1 of Oryza sativa subsp. japonica (Rice).